The following is a 412-amino-acid chain: Imidazolonepropionase (412 aa).

Fe(3+)-binding residues include His-76 and His-78. Zn(2+)-binding residues include His-76 and His-78. 4-imidazolone-5-propanoate-binding residues include Arg-85, Tyr-148, and His-181. Tyr-148 contacts N-formimidoyl-L-glutamate. Residue His-242 coordinates Fe(3+). His-242 provides a ligand contact to Zn(2+). Glu-245 is a 4-imidazolone-5-propanoate binding site. Asp-317 is a Fe(3+) binding site. Asp-317 provides a ligand contact to Zn(2+). 2 residues coordinate N-formimidoyl-L-glutamate: Asn-319 and Gly-321. Ser-322 provides a ligand contact to 4-imidazolone-5-propanoate.

Belongs to the metallo-dependent hydrolases superfamily. HutI family. It depends on Zn(2+) as a cofactor. Requires Fe(3+) as cofactor.

The protein resides in the cytoplasm. The catalysed reaction is 4-imidazolone-5-propanoate + H2O = N-formimidoyl-L-glutamate. It functions in the pathway amino-acid degradation; L-histidine degradation into L-glutamate; N-formimidoyl-L-glutamate from L-histidine: step 3/3. Functionally, catalyzes the hydrolytic cleavage of the carbon-nitrogen bond in imidazolone-5-propanoate to yield N-formimidoyl-L-glutamate. It is the third step in the universal histidine degradation pathway. This Staphylococcus aureus (strain bovine RF122 / ET3-1) protein is Imidazolonepropionase.